A 106-amino-acid chain; its full sequence is Trp operon repressor homolog (106 aa).

Residues 59 to 82 (QREIQQILNTSAATITRGSNMIKI) mediate DNA binding.

This sequence belongs to the TrpR family. As to quaternary structure, homodimer.

It localises to the cytoplasm. This protein is an aporepressor. When complexed with L-tryptophan it binds the operator region of the trp operon and prevents the initiation of transcription. This is Trp operon repressor homolog from Histophilus somni (strain 2336) (Haemophilus somnus).